A 932-amino-acid polypeptide reads, in one-letter code: Isoleucine--tRNA ligase (932 aa).

Residues 57-67 (PYANGNIHLGH) carry the 'HIGH' region motif. L-isoleucyl-5'-AMP is bound at residue Glu552. Positions 593 to 597 (KMSKS) match the 'KMSKS' region motif. Lys596 contributes to the ATP binding site. 4 residues coordinate Zn(2+): Cys889, Cys892, Cys911, and Cys914.

It belongs to the class-I aminoacyl-tRNA synthetase family. IleS type 1 subfamily. In terms of assembly, monomer. Zn(2+) serves as cofactor.

The protein resides in the cytoplasm. It catalyses the reaction tRNA(Ile) + L-isoleucine + ATP = L-isoleucyl-tRNA(Ile) + AMP + diphosphate. Functionally, catalyzes the attachment of isoleucine to tRNA(Ile). As IleRS can inadvertently accommodate and process structurally similar amino acids such as valine, to avoid such errors it has two additional distinct tRNA(Ile)-dependent editing activities. One activity is designated as 'pretransfer' editing and involves the hydrolysis of activated Val-AMP. The other activity is designated 'posttransfer' editing and involves deacylation of mischarged Val-tRNA(Ile). The protein is Isoleucine--tRNA ligase of Lactococcus lactis subsp. lactis (strain IL1403) (Streptococcus lactis).